Consider the following 95-residue polypeptide: ESAT-6-like protein EsxC (95 aa).

It belongs to the WXG100 family. ESAT-6 subfamily.

It is found in the secreted. This is ESAT-6-like protein EsxC from Mycolicibacterium paratuberculosis (strain ATCC BAA-968 / K-10) (Mycobacterium paratuberculosis).